Here is a 423-residue protein sequence, read N- to C-terminus: Serine hydroxymethyltransferase (423 aa).

(6S)-5,6,7,8-tetrahydrofolate is bound by residues Leu-120 and 124-126 (GHL). The residue at position 229 (Lys-229) is an N6-(pyridoxal phosphate)lysine. 353-355 (SPF) contacts (6S)-5,6,7,8-tetrahydrofolate.

Belongs to the SHMT family. In terms of assembly, homodimer. Pyridoxal 5'-phosphate is required as a cofactor.

The protein resides in the cytoplasm. It carries out the reaction (6R)-5,10-methylene-5,6,7,8-tetrahydrofolate + glycine + H2O = (6S)-5,6,7,8-tetrahydrofolate + L-serine. The protein operates within one-carbon metabolism; tetrahydrofolate interconversion. Its pathway is amino-acid biosynthesis; glycine biosynthesis; glycine from L-serine: step 1/1. In terms of biological role, catalyzes the reversible interconversion of serine and glycine with tetrahydrofolate (THF) serving as the one-carbon carrier. This reaction serves as the major source of one-carbon groups required for the biosynthesis of purines, thymidylate, methionine, and other important biomolecules. Also exhibits THF-independent aldolase activity toward beta-hydroxyamino acids, producing glycine and aldehydes, via a retro-aldol mechanism. The sequence is that of Serine hydroxymethyltransferase from Prochlorococcus marinus (strain AS9601).